Reading from the N-terminus, the 607-residue chain is Rap1 GTPase-GDP dissociation stimulator 1 (607 aa).

ARM repeat units follow at residues 89 to 131 (GLIS…DQAG) and 170 to 211 (DSLQ…NLAE). The interval 122–170 (EGRSAVDQAGGAQIVIDHLRSLCGRTDPASEKLMTVFCGMLMNYSNEND) is prevents binding to prenylated RHOA. Position 230 is an N6-acetyllysine (Lys230). 3 ARM repeats span residues 347–390 (DGNC…NLAI), 391–431 (PVVN…MLID), and 479–519 (SKDV…LIAA).

As to quaternary structure, interacts with RABL3. Interacts with RHOT1. In terms of assembly, interacts with unprenylated RHOA; the interaction is direct. Interacts with RAP1A. Interacts with KRAS. Interacts with RAC1. Interacts with RAP1B. Preferentially interacts with unprenylated GTPases that will become geranylgeranylated. May also interact with prenylated GTPases. Interacts with prenylated RHOA; the interaction is direct and in a 1:1 stoichiometry. Interacts with RAP1A. Interacts with KRAS. Interacts with RAC1. Interacts with RAP1B. Preferentially interacts with prenylated GTPases. Serotonylated on Gln residues by TGM2 in response to hypoxia, leading to its inactivation.

Its subcellular location is the cytoplasm. It is found in the cytosol. It localises to the endoplasmic reticulum. The protein resides in the mitochondrion. The protein localises to the nucleus. Its function is as follows. Acts as a GEF (guanine nucleotide exchange factor) for the Rho family of small GTP-binding proteins (G proteins) that stimulates the dissociation of GDP to enable subsequent binding of GTP. Additionally, appears to chaperone the processing and/or trafficking of small GTPases containing a C-terminal polybasic region independently of GEF activity. Targets include RAP1A/RAP1B, RHOA, RHOB, RHOC, RAC1 and KRAS. Regulates mitochondrial dynamics by controlling RHOT function to promote mitochondrial fission during high calcium conditions. Able to promote the Ca(2+) release from the endoplasmic reticulum via both inositol trisphosphate (Ins3P) and ryanodine sensitive receptors leading to a enhanced mitochondrial Ca(2+) uptake. In terms of biological role, acts as a GEF (guanine nucleotide exchange factor) for unprenylated RHOA. Chaperones the entry and passage of small GTPases through the prenylation pathway. Recognizes the last amino acid in the GTPase C-terminal CAAX motif with a preference for 'Leu' over 'Met', indicating involvement in the geranylgeranylation pathway. May also recognize prenylated GTPases. Functionally, acts as a GEF (guanine nucleotide exchange factor) for prenylated RHOA. Acts as a GEF for RHOC. Chaperones the downstream trafficking and/or processing of small newly prenylated GTPases. Escorts RAC1 to the nucleus. The sequence is that of Rap1 GTPase-GDP dissociation stimulator 1 from Mus musculus (Mouse).